Reading from the N-terminus, the 1192-residue chain is Coiled-coil domain-containing protein 40 (1192 aa).

Disordered stretches follow at residues 1 to 78 (MMDA…PGMD), 126 to 153 (KAKH…LEVS), 173 to 196 (SSPE…NVSA), 211 to 246 (EPIE…YQRD), and 261 to 289 (GSLT…STPR). Positions 27–45 (PETEVEFIGETAPDTDVEF) are enriched in acidic residues. Residues 215–228 (PTEPPEPAEPPKPA) show a composition bias toward pro residues. Residues 267 to 279 (DTDDLPLETDEPP) are compositionally biased toward acidic residues. Residue serine 306 is modified to Phosphoserine. Coiled coils occupy residues 308–369 (EALL…ATKQ), 425–451 (KTCQ…ALHL), 581–649 (DSEI…MLNK), 733–768 (NTNC…EIAR), 830–871 (LQQE…KIAH), 919–972 (LRTL…EMRS), and 1044–1118 (QQRE…IVTL).

Belongs to the CCDC40 family. Specifically expressed in the embryonic node and midline.

It localises to the cytoplasm. It is found in the cell projection. The protein resides in the cilium. Its function is as follows. Required for assembly of dynein regulatory complex (DRC) and inner dynein arm (IDA) complexes, which are responsible for ciliary beat regulation, thereby playing a central role in motility in cilia and flagella. Probably acts together with CCDC39 to form a molecular ruler that determines the 96 nanometer (nm) repeat length and arrangements of components in cilia and flagella. Not required for outer dynein arm complexes assembly. Required for axonemal recruitment of CCDC39. In Mus musculus (Mouse), this protein is Coiled-coil domain-containing protein 40.